A 150-amino-acid chain; its full sequence is Large ribosomal subunit protein uL15 (150 aa).

Residues 1–57 are disordered; the sequence is MRLEDIRPQAGSTRRRRRLGRGVSAGQGASCGKGMRGQKARKGGSTRPGFEGGQTPL. Gly residues predominate over residues 23 to 35; it reads VSAGQGASCGKGM.

This sequence belongs to the universal ribosomal protein uL15 family. Part of the 50S ribosomal subunit.

Functionally, binds to the 23S rRNA. This Synechococcus sp. (strain JA-2-3B'a(2-13)) (Cyanobacteria bacterium Yellowstone B-Prime) protein is Large ribosomal subunit protein uL15.